The sequence spans 245 residues: Ribonuclease PH (245 aa).

Phosphate contacts are provided by residues Arg-86 and 124–126 (GTR).

Belongs to the RNase PH family. As to quaternary structure, homohexameric ring arranged as a trimer of dimers.

It catalyses the reaction tRNA(n+1) + phosphate = tRNA(n) + a ribonucleoside 5'-diphosphate. In terms of biological role, phosphorolytic 3'-5' exoribonuclease that plays an important role in tRNA 3'-end maturation. Removes nucleotide residues following the 3'-CCA terminus of tRNAs; can also add nucleotides to the ends of RNA molecules by using nucleoside diphosphates as substrates, but this may not be physiologically important. Probably plays a role in initiation of 16S rRNA degradation (leading to ribosome degradation) during starvation. The sequence is that of Ribonuclease PH from Bacillus cereus (strain G9842).